The sequence spans 674 residues: Putative kinase-like protein TMKL1 (674 aa).

Residues 1 to 25 form the signal peptide; it reads MGMEALRFLHVIFFFVLILHCHCGT. At 26–295 the chain is on the extracellular side; it reads SLSGSSDVKL…PLKPCLGSSR (270 aa). N-linked (GlcNAc...) asparagine glycosylation is found at Asn57, Asn90, Asn95, and Asn110. LRR repeat units lie at residues 100 to 122, 124 to 146, 148 to 169, and 173 to 194; these read HLLS…IGEF, MLQS…LGYT, SLSD…SIWN, and KLVS…PALP. 2 N-linked (GlcNAc...) asparagine glycosylation sites follow: Asn183 and Asn195. LRR repeat units follow at residues 200–222, 224–244, and 247–269; these read NLQV…ITRF, GVKS…EGLG, and ELES…GESK. 2 N-linked (GlcNAc...) asparagine glycosylation sites follow: Asn252 and Asn257. The chain crosses the membrane as a helical span at residues 296 to 323; that stretch reads LSPGAVAGLVIGLMSGAVVVASLLIGYL. The Cytoplasmic portion of the chain corresponds to 324–674; that stretch reads QNKKRKSSIE…ETRSDAETPF (351 aa). A disordered region spans residues 331-350; that stretch reads SIESEDDLEEGDEEDEIGEK. Positions 333–348 are enriched in acidic residues; the sequence is ESEDDLEEGDEEDEIG. At Ser334 the chain carries Phosphoserine. The Protein kinase domain maps to 373 to 674; the sequence is NATGQVMEKT…ETRSDAETPF (302 aa). Phosphothreonine is present on Thr375. A Phosphoserine modification is found at Ser454. The disordered stretch occupies residues 649-674; the sequence is LEENRPRNRSALYSPTETRSDAETPF.

Belongs to the protein kinase superfamily.

The protein localises to the membrane. Does not seem to have conserved a kinase activity. This is Putative kinase-like protein TMKL1 (TMKL1) from Arabidopsis thaliana (Mouse-ear cress).